The primary structure comprises 298 residues: Protein Bel-1 (298 aa).

A compositionally biased stretch (basic and acidic residues) spans 1 to 17 (MASWEKEKELAHLHQPE). The segment at 1–46 (MASWEKEKELAHLHQPEDDPLPDLSLLLDMDQFEPTEGPDSNPGAE) is disordered. A DNA-binding region spans residues 91-200 (SKWACARLIL…GEPLKPRVRA (110 aa)). Residues 214 to 223 (ADRPKRSRWG) carry the Nuclear localization signal motif. Residues 225–298 (APREQPNTSS…SGPPTGPSEN (74 aa)) form a transactivation domain region.

As to quaternary structure, homodimer or homomultimer. Forms complexes with the host nuclear factors NFIA, NFIB, NFIC or NFIX.

It is found in the host nucleus. Functionally, transcriptional transactivator that activates the viral internal promoter (IP), thereby enhancing its own expression. This transactivation is repressed by nuclear factor I. Also transactivates the long terminal repeat (LTR) promoter, thereby inducing structural gene expression, initiating the late phase of infection. It is therefore a key regulator of viral gene expression. It directly binds to and activates DNA target sites of viral promoters and those of distinct cellular genes. Required for viral replication. The polypeptide is Protein Bel-1 (bel1) (Chlorocebus aethiops (Green monkey)).